The sequence spans 489 residues: Cytochrome P450 71A26 (489 aa).

A helical membrane pass occupies residues 1-21 (MMIMFFLLCSIIFVVTIIIFR). Cysteine 431 contacts heme.

Belongs to the cytochrome P450 family. Heme serves as cofactor.

The protein localises to the membrane. The polypeptide is Cytochrome P450 71A26 (CYP71A26) (Arabidopsis thaliana (Mouse-ear cress)).